Here is a 335-residue protein sequence, read N- to C-terminus: Glyceraldehyde-3-phosphate dehydrogenase (335 aa).

NAD(+)-binding positions include 12–13 (RI), Asp34, and Arg79. D-glyceraldehyde 3-phosphate contacts are provided by residues 150 to 152 (SCT), Thr181, 210 to 211 (TG), and Arg233. The active-site Nucleophile is Cys151. Position 315 (Asn315) interacts with NAD(+).

This sequence belongs to the glyceraldehyde-3-phosphate dehydrogenase family. As to quaternary structure, homotetramer.

It localises to the cytoplasm. It carries out the reaction D-glyceraldehyde 3-phosphate + phosphate + NAD(+) = (2R)-3-phospho-glyceroyl phosphate + NADH + H(+). It participates in carbohydrate degradation; glycolysis; pyruvate from D-glyceraldehyde 3-phosphate: step 1/5. The sequence is that of Glyceraldehyde-3-phosphate dehydrogenase (GPD) from Ogataea parapolymorpha (strain ATCC 26012 / BCRC 20466 / JCM 22074 / NRRL Y-7560 / DL-1) (Yeast).